The sequence spans 389 residues: Alpha-2B adrenergic receptor (389 aa).

Residues 1–25 traverse the membrane as a helical segment; that stretch reads AIAAVITFLILFTIFGNALVILAVL. At 26–36 the chain is on the cytoplasmic side; it reads TSRSLRAPQNL. Residues 37 to 62 form a helical membrane-spanning segment; it reads FLVSLAAADILVATLIIPFSLANELL. Over 63–72 the chain is Extracellular; the sequence is GYWYFWRTWC. A disulfide bridge links Cys72 with Cys151. Residues 73–95 form a helical membrane-spanning segment; the sequence is EVYLALDVLFCTSSIVHLCAISL. Topologically, residues 96-117 are cytoplasmic; it reads DRYWAVSRALEYNSKRTPRRIK. Residues 118 to 140 form a helical membrane-spanning segment; it reads CIILTVWLIAAAISLPPLIYKGD. The Extracellular segment spans residues 141-156; the sequence is QGPQPRGRPQCMLNQE. Residues 157–180 traverse the membrane as a helical segment; it reads AWYILSSSIGSFFAPCLIMILVYL. Residues 181 to 353 lie on the Cytoplasmic side of the membrane; it reads RIYLIAKRSN…LTREKRFTFV (173 aa). Disordered regions lie at residues 192–218 and 231–310; these read RGPRAKGAPGEGESKQPHPLTAGPLAL and DGEA…HLQQ. Residues 234–249 are compositionally biased toward basic and acidic residues; it reads ANGHSKLTGEKERETS. Residues 354–377 traverse the membrane as a helical segment; the sequence is LTVVIGVFVLCWFPFFFSYSLGAI. Over 378 to 386 the chain is Extracellular; the sequence is CPQHCKVPH. Residues 387-389 form a helical membrane-spanning segment; the sequence is GLF.

This sequence belongs to the G-protein coupled receptor 1 family. Adrenergic receptor subfamily. ADRA2B sub-subfamily. In terms of assembly, interacts with RAB26. Interacts with PPP1R9B.

The protein resides in the cell membrane. Functionally, alpha-2 adrenergic receptors mediate the catecholamine-induced inhibition of adenylate cyclase through the action of G proteins. The sequence is that of Alpha-2B adrenergic receptor (ADRA2B) from Procavia capensis habessinica (Abyssinian hyrax).